A 183-amino-acid polypeptide reads, in one-letter code: NADH-ubiquinone oxidoreductase chain 5 (183 aa).

4 helical membrane passes run 7–27 (FMCYLSILTFFMPMLVTGDNS), 30–50 (LFLGWEGVGLASYLLIHFWFT), 111–131 (AITLICILLLIGAVGKSAQIG), and 144–164 (TPVSALIHAATMVTAGVFMIA).

It belongs to the complex I subunit 5 family.

It localises to the mitochondrion inner membrane. It catalyses the reaction a ubiquinone + NADH + 5 H(+)(in) = a ubiquinol + NAD(+) + 4 H(+)(out). In terms of biological role, core subunit of the mitochondrial membrane respiratory chain NADH dehydrogenase (Complex I) that is believed to belong to the minimal assembly required for catalysis. Complex I functions in the transfer of electrons from NADH to the respiratory chain. The immediate electron acceptor for the enzyme is believed to be ubiquinone. The polypeptide is NADH-ubiquinone oxidoreductase chain 5 (NDH5) (Pisum sativum (Garden pea)).